The sequence spans 360 residues: MKKLLALAVIAPLLISCSSSTKKGETYNEAWVKDTNGFDILMGQFANNIENLWGYKEVLIAGPKDYVKYTDQFQTRSHINFDDGTITVETIAGTEPTAHLRRAIIKTLLMGDDPTSVDLYSDVDDIKISKEPFLYGQVLDNTGQPIRWEGRATTFADYLLKTRLKSRSNGLRIIYSVTINLVPNHLDKRAHKYIGMVRQASRKYGVDESLILAIMQTESSFNPYAVSHADALGLMQVVQHSAGKDVFRSQGKSGTPSRNFLFDPASNIDTGTAYLAMLNNVYLSGIENPTSRRYAVITAYNGGAGSVLRIFSNDKIQAANMINRMSPGDVYQILTTRHPSAESRRYLYKVNSAQRSYRRR.

The signal sequence occupies residues 1–16 (MKKLLALAVIAPLLIS). Residue Cys17 is the site of N-palmitoyl cysteine attachment. Residue Cys17 is the site of S-diacylglycerol cysteine attachment.

The protein belongs to the transglycosylase Slt family.

It localises to the cell outer membrane. It catalyses the reaction Exolytic cleavage of the (1-&gt;4)-beta-glycosidic linkage between N-acetylmuramic acid (MurNAc) and N-acetylglucosamine (GlcNAc) residues in peptidoglycan, from either the reducing or the non-reducing ends of the peptidoglycan chains, with concomitant formation of a 1,6-anhydrobond in the MurNAc residue.. Functionally, murein-degrading enzyme. May play a role in recycling of muropeptides during cell elongation and/or cell division. The polypeptide is Membrane-bound lytic murein transglycosylase C (Salmonella typhi).